The sequence spans 156 residues: MIILGLDPSLSCTGWGLIRVEGSRISHIANGQIKTDAKAALPDRLVHLDTALAAVIADHAPKCAAVEEVFVNDNPQSTLKLAHARGVVLLGCARGGLTVTQYAPRLVKKAIVGTGGAAKGQVQAMLGVLLPGTKVAGPDAADALAVAICHANHRRR.

Active-site residues include D7, E67, and D139. Mg(2+) contacts are provided by D7, E67, and D139.

The protein belongs to the RuvC family. As to quaternary structure, homodimer which binds Holliday junction (HJ) DNA. The HJ becomes 2-fold symmetrical on binding to RuvC with unstacked arms; it has a different conformation from HJ DNA in complex with RuvA. In the full resolvosome a probable DNA-RuvA(4)-RuvB(12)-RuvC(2) complex forms which resolves the HJ. Mg(2+) is required as a cofactor.

Its subcellular location is the cytoplasm. The enzyme catalyses Endonucleolytic cleavage at a junction such as a reciprocal single-stranded crossover between two homologous DNA duplexes (Holliday junction).. The RuvA-RuvB-RuvC complex processes Holliday junction (HJ) DNA during genetic recombination and DNA repair. Endonuclease that resolves HJ intermediates. Cleaves cruciform DNA by making single-stranded nicks across the HJ at symmetrical positions within the homologous arms, yielding a 5'-phosphate and a 3'-hydroxyl group; requires a central core of homology in the junction. The consensus cleavage sequence is 5'-(A/T)TT(C/G)-3'. Cleavage occurs on the 3'-side of the TT dinucleotide at the point of strand exchange. HJ branch migration catalyzed by RuvA-RuvB allows RuvC to scan DNA until it finds its consensus sequence, where it cleaves and resolves the cruciform DNA. The chain is Crossover junction endodeoxyribonuclease RuvC from Sphingopyxis alaskensis (strain DSM 13593 / LMG 18877 / RB2256) (Sphingomonas alaskensis).